Here is a 456-residue protein sequence, read N- to C-terminus: IQ domain-containing protein IQM3 (456 aa).

Residues 46–75 (TRLAAVKVQKVYRSYRTRRRLADSVVVAEE) enclose the IQ domain. The disordered stretch occupies residues 315 to 358 (SEDSDSYDDYVKSNGGSEPEPLKKEDTTFQAETETDENGNGTVG).

As to expression, expressed in roots, rosette and cauline leaves, flowers and siliques, and at lower levels in stems.

It localises to the cytoplasm. The protein localises to the nucleus. Its function is as follows. May be involved in biotic and abiotic stress responses. This chain is IQ domain-containing protein IQM3, found in Arabidopsis thaliana (Mouse-ear cress).